We begin with the raw amino-acid sequence, 396 residues long: Ribosomal RNA large subunit methyltransferase I (396 aa).

The 78-residue stretch at A2–F79 folds into the PUA domain.

This sequence belongs to the methyltransferase superfamily. RlmI family.

Its subcellular location is the cytoplasm. It catalyses the reaction cytidine(1962) in 23S rRNA + S-adenosyl-L-methionine = 5-methylcytidine(1962) in 23S rRNA + S-adenosyl-L-homocysteine + H(+). Specifically methylates the cytosine at position 1962 (m5C1962) of 23S rRNA. The chain is Ribosomal RNA large subunit methyltransferase I from Shewanella sp. (strain ANA-3).